A 949-amino-acid polypeptide reads, in one-letter code: MAM domain-containing glycosylphosphatidylinositol anchor protein 1 (949 aa).

The signal sequence occupies residues 1–18 (MEMICVLFLSLVPAYSRG). 2 consecutive Ig-like domains span residues 24–125 (PAQA…IRVD) and 132–230 (PVLT…KSIT). 2 N-linked (GlcNAc...) asparagine glycosylation sites follow: N42 and N90. 2 disulfides stabilise this stretch: C60–C108 and C157–C214. Residues N235, N247, N257, N292, N307, and N331 are each glycosylated (N-linked (GlcNAc...) asparagine). In terms of domain architecture, Ig-like 3 spans 240-323 (PALKLSVNET…VGNPAKKTVN (84 aa)). A disulfide bridge links C262 with C308. Ig-like domains are found at residues 338-432 (PDVI…VEVN), 440-531 (PTIS…ALVQ), and 537-625 (PPVV…FQVS). A disulfide bridge connects residues C357 and C415. N-linked (GlcNAc...) asparagine glycosylation occurs at N432. Cystine bridges form between C463–C513 and C559–C609. N-linked (GlcNAc...) asparagine glycans are attached at residues N577, N649, and N820. The 101-residue stretch at 637–737 (TPNPTLSQKQ…ARIIRYMEPI (101 aa)) folds into the Fibronectin type-III domain. One can recognise an MAM domain in the interval 745-912 (NTCRFEDEKI…VTLKKGDCPR (168 aa)). The GPI-anchor amidated serine moiety is linked to residue S926. Residues 927 to 949 (GVSAQHGPCLCGPLTFFLYVLLR) constitute a propeptide, removed in mature form.

Interacts heterophilically through its MAM domain with proteins in axon-rich regions and through its Ig-like domains with proteins in differentiating muscle. In terms of tissue distribution, in the embryonic brachial spinal cord, selectively expressed by medial lateral motor column neurons, some populations of dorsal root ganglion neurons, and interneurons.

It localises to the cell membrane. In terms of biological role, required for radial migration of cortical neurons in the superficial layer of the neocortex. The chain is MAM domain-containing glycosylphosphatidylinositol anchor protein 1 from Gallus gallus (Chicken).